The primary structure comprises 476 residues: MSAVPWIIKYRPKRVEDVIDQEKAKEVLIPWIKKWLSGTPPEKRAALLWGPPGVGKTSLVEAICNEFNLEKIEMNASDFRRKGDIERVAIAAATKKPLPPWKGRLILLDEVDGLSPRGDEGAVAAILELIKKTKNPIVMTANDPWGTHLRPIREESLLVEFKRIPKTKAREFLLKICEKEGVYCEKEAVDYIIEKNKGDLRASINDLQSIAEAYGKVTLDLASALLVERDRVLTPWEMLQSLFYSKYSWQARKAVTSTDLDYDTLFLWIAENVPKQYGDDPYDLWRGMEAVSRADVIYGRIRRTMNWSLLPYFFNALGPGVALAKTKYHKRARWSYPEKIVLLARTKEERRVRDELASHLALLTHSSKSYVRREIIPMLQFIAQVNPNYFARLALGLRLSDPMIKYLAKSKYQLVKKYVEELKSSRTVKAEEQTKAKEVVKELKKEYEKGTKKGKGEKRRKGSDEGSGLLKWLKKD.

50–57 (GPPGVGKT) provides a ligand contact to ATP. The disordered stretch occupies residues 447-476 (YEKGTKKGKGEKRRKGSDEGSGLLKWLKKD). The segment covering 452-461 (KKGKGEKRRK) has biased composition (basic residues).

The protein belongs to the activator 1 small subunits family. RfcL subfamily. Heteromultimer composed of small subunits (RfcS) and large subunits (RfcL).

In terms of biological role, part of the RFC clamp loader complex which loads the PCNA sliding clamp onto DNA. This Ignicoccus hospitalis (strain KIN4/I / DSM 18386 / JCM 14125) protein is Replication factor C large subunit.